The sequence spans 353 residues: 3-isopropylmalate dehydrogenase (353 aa).

73–86 is a binding site for NAD(+); that stretch reads GPQYDTLDRPLRPE. Residues Arg-93, Arg-103, Arg-131, and Asp-220 each contribute to the substrate site. Asp-220, Asp-244, and Asp-248 together coordinate Mg(2+). 278–290 contacts NAD(+); the sequence is GSAPDIAGKNLAN.

It belongs to the isocitrate and isopropylmalate dehydrogenases family. LeuB type 1 subfamily. Homodimer. Requires Mg(2+) as cofactor. The cofactor is Mn(2+).

The protein resides in the cytoplasm. It catalyses the reaction (2R,3S)-3-isopropylmalate + NAD(+) = 4-methyl-2-oxopentanoate + CO2 + NADH. It participates in amino-acid biosynthesis; L-leucine biosynthesis; L-leucine from 3-methyl-2-oxobutanoate: step 3/4. Its function is as follows. Catalyzes the oxidation of 3-carboxy-2-hydroxy-4-methylpentanoate (3-isopropylmalate) to 3-carboxy-4-methyl-2-oxopentanoate. The product decarboxylates to 4-methyl-2 oxopentanoate. In Thiobacillus denitrificans (strain ATCC 25259 / T1), this protein is 3-isopropylmalate dehydrogenase.